A 160-amino-acid polypeptide reads, in one-letter code: Cytochrome b6-f complex subunit 4 (160 aa).

3 consecutive transmembrane segments (helical) span residues 36–56 (LLYIFPVVILGTIACVVGLAV), 95–115 (LLGIALQTLIPLGLILIPFIE), and 131–151 (AFFLFGTALTIYLGIGACLPI).

Belongs to the cytochrome b family. PetD subfamily. In terms of assembly, the 4 large subunits of the cytochrome b6-f complex are cytochrome b6, subunit IV (17 kDa polypeptide, PetD), cytochrome f and the Rieske protein, while the 4 small subunits are PetG, PetL, PetM and PetN. The complex functions as a dimer.

It localises to the cellular thylakoid membrane. Its function is as follows. Component of the cytochrome b6-f complex, which mediates electron transfer between photosystem II (PSII) and photosystem I (PSI), cyclic electron flow around PSI, and state transitions. This is Cytochrome b6-f complex subunit 4 from Prochlorococcus marinus (strain SARG / CCMP1375 / SS120).